The chain runs to 327 residues: Lipoyl synthase (327 aa).

[4Fe-4S] cluster is bound by residues cysteine 75, cysteine 80, cysteine 86, cysteine 101, cysteine 105, cysteine 108, and serine 315. The 218-residue stretch at 87–304 folds into the Radical SAM core domain; it reads FGNGTATFMI…EEEAYKMGFS (218 aa).

The protein belongs to the radical SAM superfamily. Lipoyl synthase family. Requires [4Fe-4S] cluster as cofactor.

It is found in the cytoplasm. The enzyme catalyses [[Fe-S] cluster scaffold protein carrying a second [4Fe-4S](2+) cluster] + N(6)-octanoyl-L-lysyl-[protein] + 2 oxidized [2Fe-2S]-[ferredoxin] + 2 S-adenosyl-L-methionine + 4 H(+) = [[Fe-S] cluster scaffold protein] + N(6)-[(R)-dihydrolipoyl]-L-lysyl-[protein] + 4 Fe(3+) + 2 hydrogen sulfide + 2 5'-deoxyadenosine + 2 L-methionine + 2 reduced [2Fe-2S]-[ferredoxin]. It participates in protein modification; protein lipoylation via endogenous pathway; protein N(6)-(lipoyl)lysine from octanoyl-[acyl-carrier-protein]: step 2/2. Catalyzes the radical-mediated insertion of two sulfur atoms into the C-6 and C-8 positions of the octanoyl moiety bound to the lipoyl domains of lipoate-dependent enzymes, thereby converting the octanoylated domains into lipoylated derivatives. This chain is Lipoyl synthase, found in Variovorax paradoxus (strain S110).